The sequence spans 552 residues: HTH-type transcriptional regulator SgrR (552 aa).

The region spanning 1–116 is the HTH marR-type domain; that stretch reads MPSGRLQQQF…LISHLGRSFR (116 aa). A DNA-binding region (H-T-H motif) is located at residues 26-49; that stretch reads LNELADLLNCSRRHMRTLLNTMQA. The interval 163–493 is solute-binding; sequence ELEADIAHHW…RDWQDDAAQW (331 aa).

Its function is as follows. Activates the small RNA gene sgrS under glucose-phosphate stress conditions as well as yfdZ. Represses its own transcription under both stress and non-stress conditions. Might act as a sensor of the intracellular accumulation of phosphoglucose by binding these molecules in its C-terminal solute-binding domain. This chain is HTH-type transcriptional regulator SgrR, found in Salmonella choleraesuis (strain SC-B67).